The sequence spans 228 residues: Ion-translocating oxidoreductase complex subunit E (228 aa).

5 helical membrane passes run 18-38 (ALVQ…ATNA), 69-89 (IPIY…LINA), 92-112 (FGLY…CIVV), 125-145 (LLSA…MFVL), and 182-202 (PFLL…MLAV).

The protein belongs to the NqrDE/RnfAE family. In terms of assembly, the complex is composed of six subunits: RnfA, RnfB, RnfC, RnfD, RnfE and RnfG.

The protein localises to the cell inner membrane. Its function is as follows. Part of a membrane-bound complex that couples electron transfer with translocation of ions across the membrane. This Cronobacter sakazakii (strain ATCC BAA-894) (Enterobacter sakazakii) protein is Ion-translocating oxidoreductase complex subunit E.